The sequence spans 79 residues: Small ribosomal subunit protein uS17 (79 aa).

The protein belongs to the universal ribosomal protein uS17 family. Part of the 30S ribosomal subunit.

One of the primary rRNA binding proteins, it binds specifically to the 5'-end of 16S ribosomal RNA. The sequence is that of Small ribosomal subunit protein uS17 from Caulobacter sp. (strain K31).